Here is a 180-residue protein sequence, read N- to C-terminus: 3-phenylpropionate/cinnamic acid dioxygenase subunit beta (180 aa).

The protein belongs to the bacterial ring-hydroxylating dioxygenase beta subunit family. In terms of assembly, this dioxygenase system consists of four proteins: the two subunits of the hydroxylase component (HcaE and HcaF), a ferredoxin (HcaC) and a ferredoxin reductase (HcaD).

The catalysed reaction is 3-phenylpropanoate + NADH + O2 + H(+) = 3-(cis-5,6-dihydroxycyclohexa-1,3-dien-1-yl)propanoate + NAD(+). The enzyme catalyses (E)-cinnamate + NADH + O2 + H(+) = (2E)-3-(cis-5,6-dihydroxycyclohexa-1,3-dien-1-yl)prop-2-enoate + NAD(+). The protein operates within aromatic compound metabolism; 3-phenylpropanoate degradation. In terms of biological role, part of the multicomponent 3-phenylpropionate dioxygenase. Converts 3-phenylpropionic acid (PP) and cinnamic acid (CI) into 3-phenylpropionate-dihydrodiol (PP-dihydrodiol) and cinnamic acid-dihydrodiol (CI-dihydrodiol), respectively. This Photorhabdus laumondii subsp. laumondii (strain DSM 15139 / CIP 105565 / TT01) (Photorhabdus luminescens subsp. laumondii) protein is 3-phenylpropionate/cinnamic acid dioxygenase subunit beta.